Reading from the N-terminus, the 422-residue chain is Acylglycerol kinase, mitochondrial (422 aa).

Lys-6 is modified (N6-acetyllysine). The interval 15-31 (TTAGLCLLTWGGHWLYG) is hydrophobic. Residues 58–199 (AQVKKATVFL…LDVLQIKGEK (142 aa)) enclose the DAGKc domain. The interval 249–271 (QASISYTGPTERPPNEPEETPVQ) is disordered.

It belongs to the AGK family. In terms of assembly, component of the TIM22 complex, which core is composed of TIMM22, associated with TIMM10 (TIMM10A and/or TIMM10B), TIMM9, AGK and TIMM29. Interacts with SMIM26. Requires Mg(2+) as cofactor. Highly expressed in muscle, heart, kidney and brain.

It localises to the mitochondrion inner membrane. Its subcellular location is the mitochondrion intermembrane space. It carries out the reaction a monoacylglycerol + ATP = a monoacyl-sn-glycero-3-phosphate + ADP + H(+). The enzyme catalyses a 1,2-diacyl-sn-glycerol + ATP = a 1,2-diacyl-sn-glycero-3-phosphate + ADP + H(+). It catalyses the reaction an N-acylsphing-4-enine + ATP = an N-acylsphing-4-enine 1-phosphate + ADP + H(+). The catalysed reaction is 1-(9Z-octadecenoyl)-sn-glycerol + ATP = 1-(9Z-octadecenoyl)-sn-glycero-3-phosphate + ADP + H(+). It carries out the reaction 1,2-di-(9Z-octadecenoyl)-sn-glycerol + ATP = 1,2-di-(9Z-octadecenoyl)-sn-glycero-3-phosphate + ADP + H(+). The enzyme catalyses a 1-acyl-sn-glycerol + ATP = a 1-acyl-sn-glycero-3-phosphate + ADP + H(+). It catalyses the reaction 1-hexadecanoyl-sn-glycerol + ATP = 1-hexadecanoyl-sn-glycero-3-phosphate + ADP + H(+). The catalysed reaction is a 2-acylglycerol + ATP = a 2-acyl-sn-glycerol 3-phosphate + ADP + H(+). It carries out the reaction 2-(5Z,8Z,11Z,14Z-eicosatetraenoyl)-glycerol + ATP = 2-(5Z,8Z,11Z,14Z-eicosatetraenoyl)-sn-glycero-3-phosphate + ADP + H(+). The enzyme catalyses 1-(5Z,8Z,11Z,14Z-eicosatetraenoyl)-sn-glycerol + ATP = 1-(5Z,8Z,11Z,14Z-eicosatetraenoyl)-sn-glycero-3-phosphate + ADP + H(+). It catalyses the reaction N-(hexanoyl)sphing-4-enine + ATP = N-hexanoylsphing-4-enine 1-phosphate + ADP + H(+). It functions in the pathway lipid metabolism; glycerolipid metabolism. Its function is as follows. Lipid kinase that can phosphorylate both monoacylglycerol and diacylglycerol to form lysophosphatidic acid (LPA) and phosphatidic acid (PA), respectively. Does not phosphorylate sphingosine. Phosphorylates ceramide. Phosphorylates 1,2-dioleoylglycerol more rapidly than 2,3-dioleoylglycerol. Independently of its lipid kinase activity, acts as a component of the TIM22 complex. The TIM22 complex mediates the import and insertion of multi-pass transmembrane proteins into the mitochondrial inner membrane by forming a twin-pore translocase that uses the membrane potential as the external driving force. In the TIM22 complex, required for the import of a subset of metabolite carriers into mitochondria, such as ANT1/SLC25A4 and SLC25A24, while it is not required for the import of TIMM23. Overexpression increases the formation and secretion of LPA, resulting in transactivation of EGFR and activation of the downstream MAPK signaling pathway, leading to increased cell growth. The protein is Acylglycerol kinase, mitochondrial of Homo sapiens (Human).